A 190-amino-acid chain; its full sequence is dCTP deaminase, dUMP-forming (190 aa).

Residues 101-106 (KSSLGR), D119, 127-129 (TLE), Q148, Y162, and Q174 contribute to the dCTP site. Residue E129 is the Proton donor/acceptor of the active site. The segment at 163–190 (GSSQVGSKYQGQRGPTPSKSYQNFVKSN) is disordered.

This sequence belongs to the dCTP deaminase family. Homotrimer.

It carries out the reaction dCTP + 2 H2O = dUMP + NH4(+) + diphosphate. It participates in pyrimidine metabolism; dUMP biosynthesis; dUMP from dCTP: step 1/1. Functionally, bifunctional enzyme that catalyzes both the deamination of dCTP to dUTP and the hydrolysis of dUTP to dUMP without releasing the toxic dUTP intermediate. This chain is dCTP deaminase, dUMP-forming, found in Mycolicibacterium gilvum (strain PYR-GCK) (Mycobacterium gilvum (strain PYR-GCK)).